Here is a 379-residue protein sequence, read N- to C-terminus: Acyl-CoA dehydrogenase, short-chain specific (379 aa).

This sequence belongs to the acyl-CoA dehydrogenase family. FAD is required as a cofactor.

It carries out the reaction butanoyl-CoA + oxidized [electron-transfer flavoprotein] + H(+) = (2E)-butenoyl-CoA + reduced [electron-transfer flavoprotein]. The catalysed reaction is a short-chain 2,3-saturated fatty acyl-CoA + oxidized [electron-transfer flavoprotein] + H(+) = a short-chain (2E)-enoyl-CoA + reduced [electron-transfer flavoprotein]. It participates in lipid metabolism; butanoate metabolism. The sequence is that of Acyl-CoA dehydrogenase, short-chain specific (bcd) from Clostridium acetobutylicum (strain ATCC 824 / DSM 792 / JCM 1419 / IAM 19013 / LMG 5710 / NBRC 13948 / NRRL B-527 / VKM B-1787 / 2291 / W).